Here is a 258-residue protein sequence, read N- to C-terminus: Thymidylate synthase (258 aa).

Arginine 21 contributes to the dUMP binding site. Histidine 51 serves as a coordination point for (6R)-5,10-methylene-5,6,7,8-tetrahydrofolate. A dUMP-binding site is contributed by 121 to 122 (RR). Cysteine 141 acts as the Nucleophile in catalysis. DUMP contacts are provided by residues 161–164 (RSAD), asparagine 172, and 202–204 (HLY). Aspartate 164 contributes to the (6R)-5,10-methylene-5,6,7,8-tetrahydrofolate binding site. Alanine 257 contributes to the (6R)-5,10-methylene-5,6,7,8-tetrahydrofolate binding site.

The protein belongs to the thymidylate synthase family. Bacterial-type ThyA subfamily. As to quaternary structure, homodimer.

It localises to the cytoplasm. It catalyses the reaction dUMP + (6R)-5,10-methylene-5,6,7,8-tetrahydrofolate = 7,8-dihydrofolate + dTMP. The protein operates within pyrimidine metabolism; dTTP biosynthesis. In terms of biological role, catalyzes the reductive methylation of 2'-deoxyuridine-5'-monophosphate (dUMP) to 2'-deoxythymidine-5'-monophosphate (dTMP) while utilizing 5,10-methylenetetrahydrofolate (mTHF) as the methyl donor and reductant in the reaction, yielding dihydrofolate (DHF) as a by-product. This enzymatic reaction provides an intracellular de novo source of dTMP, an essential precursor for DNA biosynthesis. This Dichelobacter nodosus (strain VCS1703A) protein is Thymidylate synthase.